The sequence spans 135 residues: ATP synthase epsilon chain (135 aa).

It belongs to the ATPase epsilon chain family. In terms of assembly, F-type ATPases have 2 components, CF(1) - the catalytic core - and CF(0) - the membrane proton channel. CF(1) has five subunits: alpha(3), beta(3), gamma(1), delta(1), epsilon(1). CF(0) has three main subunits: a, b and c.

The protein localises to the cell inner membrane. Its function is as follows. Produces ATP from ADP in the presence of a proton gradient across the membrane. The chain is ATP synthase epsilon chain from Chelativorans sp. (strain BNC1).